Here is a 792-residue protein sequence, read N- to C-terminus: MGKKRIVLLLFISFSYAEITKESPLSIGQTLSSSNGVYELGFFSFNNSQNQYVGIWFKGIIPRVVVWVANREKPVTDSAANLVISSSGSLLLINGKHDVVWSTGEISASKGSHAELSDYGNLMVKDNVTGRTLWESFEHLGNTLLPLSTMMYNLVTGEKRGLSSWKSYTDPSPGDFWVQITPQVPSQGFVMRGSTPYYRTGPWAKTRYTGIPQMDESYTSPFSLHQDVNGSGYFSYFERDYKLSRIMLTSEGSMKVLRYNGLDWKSSYEGPANSCDIYGVCGPFGFCVISDPPKCKCFKGFVPKSIEEWKRGNWTSGCARRTELHCQGNSTGKDANVFHTVPNIKPPDFYEYANSVDAEGCYQSCLHNCSCLAFAYIPGIGCLMWSKDLMDTMQFSAGGEILSIRLAHSELDVHKRKMTIVASTVSLTLFVILGFATFGFWRNRVKHHDAWRNDLQSQDVPGLEFFEMNTIQTATSNFSLSNKLGHGGFGSVYKGKLQDGREIAVKRLSSSSEQGKQEFMNEIVLISKLQHRNLVRVLGCCVEGKEKLLIYEFMKNKSLDTFVFGSRKRLELDWPKRFDIIQGIVRGLLYLHRDSRLRVIHRDLKVSNILLDEKMNPKISDFGLARLFQGSQYQDKTRRVVGTLGYMSPEYAWTGVFSEKSDIYSFGVLLLEIISGEKISRFSYGEEGKALLAYVWECWCETRGVNLLDQALDDSSHPAEVGRCVQIGLLCVQHQPADRPNTLELLSMLTTTSDLPLPKQPTFAVHTRNDEPPSNDLMITVNEMTESVILGR.

Positions 1 to 17 (MGKKRIVLLLFISFSYA) are cleaved as a signal peptide. Residues 18-137 (EITKESPLSI…VTGRTLWESF (120 aa)) form the Bulb-type lectin domain. Residues 18–419 (EITKESPLSI…ELDVHKRKMT (402 aa)) are Extracellular-facing. Residues Asn-46, Asn-127, and Asn-229 are each glycosylated (N-linked (GlcNAc...) asparagine). The region spanning 271–307 (PANSCDIYGVCGPFGFCVISDPPKCKCFKGFVPKSIE) is the EGF-like; atypical domain. 2 disulfides stabilise this stretch: Cys-275/Cys-287 and Cys-281/Cys-295. 3 N-linked (GlcNAc...) asparagine glycosylation sites follow: Asn-313, Asn-329, and Asn-368. Residues 326–408 (CQGNSTGKDA…GEILSIRLAH (83 aa)) form the PAN domain. Cystine bridges form between Cys-361–Cys-382 and Cys-365–Cys-371. The chain crosses the membrane as a helical span at residues 420-440 (IVASTVSLTLFVILGFATFGF). Residues 441–792 (WRNRVKHHDA…EMTESVILGR (352 aa)) are Cytoplasmic-facing. Residues 478–763 (FSLSNKLGHG…DLPLPKQPTF (286 aa)) form the Protein kinase domain. Residues 484 to 492 (LGHGGFGSV) and Lys-506 each bind ATP. Ser-512 and Ser-527 each carry phosphoserine. Residues 567 to 584 (RKRLELDWPKRFDIIQGI) are caM-binding. Asp-603 acts as the Proton acceptor in catalysis. 2 positions are modified to phosphoserine: Ser-607 and Ser-620. Residue Thr-637 is modified to Phosphothreonine. 2 positions are modified to phosphoserine: Ser-680 and Ser-774.

The protein belongs to the protein kinase superfamily. Ser/Thr protein kinase family.

The protein localises to the cell membrane. It catalyses the reaction L-seryl-[protein] + ATP = O-phospho-L-seryl-[protein] + ADP + H(+). The enzyme catalyses L-threonyl-[protein] + ATP = O-phospho-L-threonyl-[protein] + ADP + H(+). This Arabidopsis thaliana (Mouse-ear cress) protein is G-type lectin S-receptor-like serine/threonine-protein kinase At1g61440.